Here is a 227-residue protein sequence, read N- to C-terminus: Cytidylate kinase (227 aa).

12–20 (GPSGSGKGT) lines the ATP pocket.

This sequence belongs to the cytidylate kinase family. Type 1 subfamily.

Its subcellular location is the cytoplasm. It catalyses the reaction CMP + ATP = CDP + ADP. The enzyme catalyses dCMP + ATP = dCDP + ADP. In Nitrosococcus oceani (strain ATCC 19707 / BCRC 17464 / JCM 30415 / NCIMB 11848 / C-107), this protein is Cytidylate kinase.